Reading from the N-terminus, the 244-residue chain is Agamous-like MADS-box protein MADS2 (244 aa).

The MADS-box domain occupies 1 to 61 (MGRGRVELKR…GKLYEFCSSS (61 aa)). In terms of domain architecture, K-box spans 88–178 (EQSSYREYLK…TRKLDEISVK (91 aa)).

Expressed in flowers and seeds.

It localises to the nucleus. Probable transcription factor involved in flower development. The protein is Agamous-like MADS-box protein MADS2 of Vitis vinifera (Grape).